The following is a 155-amino-acid chain: RNA pyrophosphohydrolase (155 aa).

Residues 6–148 enclose the Nudix hydrolase domain; that stretch reads GYRANVAIVL…KQEVYRKALT (143 aa). The Nudix box signature appears at 38-59; sequence GGVDTGETPLQAMYRELHEEIG.

It belongs to the Nudix hydrolase family. RppH subfamily. The cofactor is a divalent metal cation.

Functionally, accelerates the degradation of transcripts by removing pyrophosphate from the 5'-end of triphosphorylated RNA, leading to a more labile monophosphorylated state that can stimulate subsequent ribonuclease cleavage. The polypeptide is RNA pyrophosphohydrolase (Francisella tularensis subsp. mediasiatica (strain FSC147)).